Here is a 364-residue protein sequence, read N- to C-terminus: DNA polymerase IV (364 aa).

Residues 14–198 (IIHIDMDAFF…LPVEKFHGVG (185 aa)) form the UmuC domain. Asp-18 and Asp-116 together coordinate Mg(2+). Glu-117 is a catalytic residue.

The protein belongs to the DNA polymerase type-Y family. In terms of assembly, monomer. The cofactor is Mg(2+).

It localises to the cytoplasm. It catalyses the reaction DNA(n) + a 2'-deoxyribonucleoside 5'-triphosphate = DNA(n+1) + diphosphate. In terms of biological role, poorly processive, error-prone DNA polymerase involved in untargeted mutagenesis. Copies undamaged DNA at stalled replication forks, which arise in vivo from mismatched or misaligned primer ends. These misaligned primers can be extended by PolIV. Exhibits no 3'-5' exonuclease (proofreading) activity. May be involved in translesional synthesis, in conjunction with the beta clamp from PolIII. The polypeptide is DNA polymerase IV (Lactococcus lactis subsp. cremoris (strain SK11)).